A 192-amino-acid chain; its full sequence is uncharacterized protein (192 aa).

Residues 29 to 160 enclose the Nudix hydrolase domain; sequence QRQAAVLIPV…PLDVYRRGNS (132 aa). A Nudix box motif is present at residues 67 to 89; the sequence is GAVDSTDASLIAAALREAQEEVA. Residues E83 and E87 each coordinate Mg(2+).

The protein belongs to the Nudix hydrolase family. PCD1 subfamily. Mn(2+) is required as a cofactor. It depends on Mg(2+) as a cofactor.

In terms of biological role, probably mediates the hydrolysis of some nucleoside diphosphate derivatives. This is an uncharacterized protein from Salmonella choleraesuis (strain SC-B67).